Reading from the N-terminus, the 205-residue chain is MSNIVWHQHSVDQAARARLKGQNPVLLWFTGLSGAGKSTLAGALERALFEAGFHTYLLDGDNVRHGLCKDLGFSVADRDENLRRVGEVAKLMVDAGLVVLSAFISPTREERDSIRARFPEGQFIEVHVSTPLSVCELRDPKGLYVKARKGEIAHFTGISSPYEAPLSAELTIDTSKGDLASQVHALIDYLTAIDVISSNRLASLA.

Glycine 31–serine 38 is an ATP binding site. Catalysis depends on serine 105, which acts as the Phosphoserine intermediate.

This sequence belongs to the APS kinase family.

It catalyses the reaction adenosine 5'-phosphosulfate + ATP = 3'-phosphoadenylyl sulfate + ADP + H(+). It functions in the pathway sulfur metabolism; hydrogen sulfide biosynthesis; sulfite from sulfate: step 2/3. In terms of biological role, catalyzes the synthesis of activated sulfate. This Shewanella oneidensis (strain ATCC 700550 / JCM 31522 / CIP 106686 / LMG 19005 / NCIMB 14063 / MR-1) protein is Adenylyl-sulfate kinase.